Here is a 182-residue protein sequence, read N- to C-terminus: HGPRTase-like protein 1 (182 aa).

This sequence belongs to the purine/pyrimidine phosphoribosyltransferase family. Archaeal HPRT subfamily.

Its function is as follows. May catalyze a purine salvage reaction, the substrate is unknown. In Haloarcula marismortui (strain ATCC 43049 / DSM 3752 / JCM 8966 / VKM B-1809) (Halobacterium marismortui), this protein is HGPRTase-like protein 1.